The chain runs to 185 residues: FK506-binding protein 2 (185 aa).

The first 20 residues, 1-20 (MQGLLLSLSLLASAAVGVLA), serve as a signal peptide directing secretion. Positions 41–129 (GDKINVHYKG…VFETELVGIE (89 aa)) constitute a PPIase FKBP-type domain. Residues 182–185 (HNEL) carry the Prevents secretion from ER motif.

It belongs to the FKBP-type PPIase family. FKBP2 subfamily.

It is found in the endoplasmic reticulum. It catalyses the reaction [protein]-peptidylproline (omega=180) = [protein]-peptidylproline (omega=0). Its activity is regulated as follows. Inhibited by both FK506 and rapamycin. Its function is as follows. PPIases accelerate the folding of proteins. It catalyzes the cis-trans isomerization of proline imidic peptide bonds in oligopeptides. The sequence is that of FK506-binding protein 2 (FPR2) from Podospora anserina (Pleurage anserina).